The chain runs to 669 residues: MYSTVFYTSVHPSTSVLSRKQLPLLISKDFSAELYHSLPCRSLENGHINKVKGVKVKATIAEAPVTPTEKTDSGANGDLKVPQKKLKVLVAGGGIGGLVFALAAKKRGFDVLVFERDLSAIRGEGQYRGPIQIQSNALAALEAIDLDVAEDIMNAGCITGQRINGLVDGISGNWYCKFDTFTPAVERGLPVTRVISRMTLQQILARAVGEEIIMNESNVVDFEDDGEKVTVVLENGQRFTGDLLVGADGIRSKVRTNLFGPSEATYSGYTCYTGIADFVPADIDTVGYRVFLGHKQYFVSSDVGGGKMQWYAFYNEPAGGADAPNGKKERLLKIFGGWCDNVIDLLVATDEDAILRRDIYDRPPTFSWGRGRVTLLGDSVHAMQPNLGQGGCMAIEDSYQLALELEKACSRSAEFGSPVDIISSLRSYESARKLRVGVIHGLARMAAIMASTYKAYLGVGLGPLSFLTQYRIPHPGRVGGRVFIDLGMPLMLSWVLGGNGDKLEGRIKHCRLSEKANDQLRKWFEDDDALERATDAEWLLLPAGNGSSGLEAIVLSRDEDVPCTVGSISHTNIPGKSIVLPLPQVSEMHARISCKDGAFFVTDLRSEHGTWVTDNEGRRYRTSPNFPTRFHPSDVIEFGSDKAAFRVKAMKFPLKTSERKEEREAVEAA.

A chloroplast-targeting transit peptide spans 1 to 49; it reads MYSTVFYTSVHPSTSVLSRKQLPLLISKDFSAELYHSLPCRSLENGHIN. FAD is bound by residues 87–115 and 365–378; these read KVLVAGGGIGGLVFALAAKKRGFDVLVFE and TFSWGRGRVTLLGD. One can recognise an FHA domain in the interval 553 to 617; the sequence is IVLSRDEDVP…HGTWVTDNEG (65 aa).

FAD serves as cofactor.

The protein resides in the plastid. The protein localises to the chloroplast. The catalysed reaction is all-trans-zeaxanthin + 4 reduced [2Fe-2S]-[ferredoxin] + 2 O2 + 4 H(+) = all-trans-violaxanthin + 4 oxidized [2Fe-2S]-[ferredoxin] + 2 H2O. It participates in plant hormone biosynthesis; abscisate biosynthesis. In terms of biological role, converts zeaxanthin into antheraxanthin and subsequently violaxanthin. Involved in the epoxidation of zeaxanthin. Plays an important role in resistance to stresses, seed development and dormancy. In Solanum lycopersicum (Tomato), this protein is Zeaxanthin epoxidase, chloroplastic.